The following is a 141-amino-acid chain: Galactose-6-phosphate isomerase subunit LacA 1 (141 aa).

Belongs to the LacAB/RpiB family. Heteromultimeric protein consisting of LacA and LacB.

The enzyme catalyses aldehydo-D-galactose 6-phosphate = keto-D-tagatose 6-phosphate. Its pathway is carbohydrate metabolism; D-galactose 6-phosphate degradation; D-tagatose 6-phosphate from D-galactose 6-phosphate: step 1/1. This chain is Galactose-6-phosphate isomerase subunit LacA 1, found in Streptococcus agalactiae serotype III (strain NEM316).